We begin with the raw amino-acid sequence, 94 residues long: MLQSNEYFSGKVKSIGFSSSSTGRASVGVMVEGEYTFSTAEPEEMTVINGALNVLLPDATDWQVYEAGSVFNVPGHSEFHLQVAEPTSYLCRYL.

This sequence belongs to the nucleoside phosphorylase PpnP family.

The enzyme catalyses a purine D-ribonucleoside + phosphate = a purine nucleobase + alpha-D-ribose 1-phosphate. It catalyses the reaction adenosine + phosphate = alpha-D-ribose 1-phosphate + adenine. The catalysed reaction is cytidine + phosphate = cytosine + alpha-D-ribose 1-phosphate. It carries out the reaction guanosine + phosphate = alpha-D-ribose 1-phosphate + guanine. The enzyme catalyses inosine + phosphate = alpha-D-ribose 1-phosphate + hypoxanthine. It catalyses the reaction thymidine + phosphate = 2-deoxy-alpha-D-ribose 1-phosphate + thymine. The catalysed reaction is uridine + phosphate = alpha-D-ribose 1-phosphate + uracil. It carries out the reaction xanthosine + phosphate = alpha-D-ribose 1-phosphate + xanthine. Catalyzes the phosphorolysis of diverse nucleosides, yielding D-ribose 1-phosphate and the respective free bases. Can use uridine, adenosine, guanosine, cytidine, thymidine, inosine and xanthosine as substrates. Also catalyzes the reverse reactions. This is Pyrimidine/purine nucleoside phosphorylase from Shigella dysenteriae serotype 1 (strain Sd197).